Here is a 432-residue protein sequence, read N- to C-terminus: GTPase Obg (432 aa).

The 158-residue stretch at 1 to 158 (MFVDQIKIEV…RKLKLELKVL (158 aa)) folds into the Obg domain. Residues 159–335 (ADVGLVGFPS…LTHRTADVLE (177 aa)) enclose the OBG-type G domain. Residues 165 to 172 (GFPSVGKS), 190 to 194 (FTTLV), 212 to 215 (DLPG), 282 to 285 (SKMD), and 316 to 318 (SSL) each bind GTP. Mg(2+)-binding residues include serine 172 and threonine 192. The 79-residue stretch at 354–432 (TFKEDEPAFK…IEDFTFEFVE (79 aa)) folds into the OCT domain.

This sequence belongs to the TRAFAC class OBG-HflX-like GTPase superfamily. OBG GTPase family. In terms of assembly, monomer. Requires Mg(2+) as cofactor.

It is found in the cytoplasm. Functionally, an essential GTPase which binds GTP, GDP and possibly (p)ppGpp with moderate affinity, with high nucleotide exchange rates and a fairly low GTP hydrolysis rate. Plays a role in control of the cell cycle, stress response, ribosome biogenesis and in those bacteria that undergo differentiation, in morphogenesis control. The polypeptide is GTPase Obg (Ligilactobacillus salivarius (strain UCC118) (Lactobacillus salivarius)).